We begin with the raw amino-acid sequence, 377 residues long: UPF0754 membrane protein lmo2224 (377 aa).

2 consecutive transmembrane segments (helical) span residues 1–21 and 357–377; these read MSVL…GAMT and YLGG…AMWI.

Belongs to the UPF0754 family.

The protein resides in the cell membrane. The sequence is that of UPF0754 membrane protein lmo2224 from Listeria monocytogenes serovar 1/2a (strain ATCC BAA-679 / EGD-e).